Reading from the N-terminus, the 361-residue chain is Dual specificity mitogen-activated protein kinase kinase 6 (361 aa).

Basic and acidic residues-rich tracts occupy residues 1–11 and 37–48; these read MEGGSDKESKV and PKELKLPKEVFE. Positions 1-61 are disordered; the sequence is MEGGSDKESK…PAPTPPRDLD (61 aa). The interval 30-46 is d domain; it reads VRGKKKLPKELKLPKEV. The 262-residue stretch at 80–341 folds into the Protein kinase domain; that stretch reads LEQIGELGRG…YTELMQHPFF (262 aa). ATP is bound by residues 86-94 and Lys109; that span reads LGRGAYGVV. Asp206 (proton acceptor) is an active-site residue. Phosphoserine; by MAPK3 is present on Ser234. At Thr238 the chain carries Phosphothreonine; by MAPK3. The interval 338–361 is DVD domain; it reads HPFFTLHDSKDTDVASFVKTILGD.

Belongs to the protein kinase superfamily. STE Ser/Thr protein kinase family. MAP kinase kinase subfamily. Dimer. Interacts (via its D domain) with its MAP kinase substrates. Interacts (via its DVD domain) with MAP3Ks activators. Weakly autophosphorylated. Phosphorylated at Ser-234 and Thr-238 by the majority of M3Ks.

Its subcellular location is the nucleus. It localises to the cytoplasm. The protein localises to the cytoskeleton. It catalyses the reaction L-seryl-[protein] + ATP = O-phospho-L-seryl-[protein] + ADP + H(+). It carries out the reaction L-threonyl-[protein] + ATP = O-phospho-L-threonyl-[protein] + ADP + H(+). The enzyme catalyses L-tyrosyl-[protein] + ATP = O-phospho-L-tyrosyl-[protein] + ADP + H(+). Its activity is regulated as follows. Activated by dual phosphorylation on Ser-234 and Thr-238 in response to a variety of cellular stresses, including UV radiation, osmotic shock, hypoxia, inflammatory cytokines, interferon gamma (IFNG), and less often by growth factors. MAP2K6/MKK6 is activated by the majority of M3Ks. Functionally, dual specificity protein kinase which acts as an essential component of the MAP kinase signal transduction pathway. Catalyzes the concomitant phosphorylation of a threonine and a tyrosine residue in the MAP kinases p38 and plays an important role in the regulation of cellular responses to cytokines and all kinds of stresses. The p38 MAP kinase signal transduction pathway leads to direct activation of transcription factors. Phosphorylation by MAP2K6 asymmetrically activates p38 on one side of the blastodisc, an event which is necessary for blastomere cleavage. In Danio rerio (Zebrafish), this protein is Dual specificity mitogen-activated protein kinase kinase 6.